We begin with the raw amino-acid sequence, 270 residues long: uncharacterized protein (270 aa).

Basic and acidic residues predominate over residues 22–31 (EAPQRTEASR). Residues 22-42 (EAPQRTEASRTHPSPFLALPG) are disordered.

This is an uncharacterized protein from Homo sapiens (Human).